A 1998-amino-acid polypeptide reads, in one-letter code: Receptor-type tyrosine-protein phosphatase beta (1998 aa).

The N-terminal stretch at 1-22 (MLRHGALTALWITLSVVQTGVA) is a signal peptide. Fibronectin type-III domains are found at residues 23 to 109 (EQVK…VLQT), 113 to 206 (PPAR…VPSP), 207 to 291 (VKDL…TAPM), 292 to 384 (EVSN…VRNL), 378 to 466 (PEKV…QGRT), 470 to 556 (AVLQ…TVPA), 557 to 642 (QVTD…EGRT), 643 to 733 (VPSS…TVPD), 734 to 821 (KVQG…TIPE), 822 to 913 (PVKD…TVKN), 908 to 994 (PSTV…LGQT), 995 to 1088 (VPAS…VPAA), 1086 to 1173 (PAAV…GRTV), 1176 to 1263 (AVNH…TAPS), 1264 to 1357 (PPSL…TKPD), 1358 to 1449 (KIQN…IDRP), and 1449 to 1551 (PPQP…KLGA). Residues 23–1622 (EQVKCNFTLL…ESEPLFGVIE (1600 aa)) lie on the Extracellular side of the membrane. N-linked (GlcNAc...) asparagine glycosylation is found at Asn28, Asn53, Asn75, Asn173, Asn199, and Asn268. N-linked (GlcNAc...) asparagine glycosylation is found at Asn415, Asn422, Asn480, Asn575, Asn599, and Asn653. Asn830 carries N-linked (GlcNAc...) asparagine glycosylation. Residues Asn1041, Asn1097, Asn1164, Asn1186, Asn1213, Asn1275, Asn1368, Asn1471, Asn1475, and Asn1519 are each glycosylated (N-linked (GlcNAc...) asparagine). A helical transmembrane segment spans residues 1623–1643 (GVSAGLFLIGMLVALVAFFIC). The Cytoplasmic segment spans residues 1644–1997 (RQKASHSRER…EYHRDAIYSR (354 aa)). The Tyrosine-protein phosphatase domain maps to 1704–1964 (LSKEYEDLKD…VYLHQCVRDV (261 aa)). Residues Asp1871, 1905 to 1911 (CSAGVGR), and Gln1949 contribute to the substrate site. Cys1905 serves as the catalytic Phosphocysteine intermediate. Tyr1982 carries the post-translational modification Phosphotyrosine.

This sequence belongs to the protein-tyrosine phosphatase family. Receptor class 3 subfamily. As to quaternary structure, monomer. Interacts with TEK. Interacts via fibronectin type-III 17 domain with CDH5. Detected in a complex with CNTN1 and NRCAM. Interacts (phosphorylated form) with FYN and GRB2. Interacts with IGFBP2. As to expression, expression is very high in the vasculature of lung, spleen, and kidney, as well as in the heart valves, and is also present in the endothelium of arterioles and venules. Also expressed in tumor vasculature.

The protein localises to the membrane. The enzyme catalyses O-phospho-L-tyrosyl-[protein] + H2O = L-tyrosyl-[protein] + phosphate. In terms of biological role, plays an important role in blood vessel remodeling and angiogenesis. Not necessary for the initial formation of blood vessels, but is essential for their maintenance and remodeling. Can induce dephosphorylation of TEK/TIE2, CDH5/VE-cadherin and KDR/VEGFR-2. Regulates angiopoietin-TIE2 signaling in endothelial cells. Acts as a negative regulator of TIE2, and controls TIE2 driven endothelial cell proliferation, which in turn affects blood vessel remodeling during embryonic development and determines blood vessel size during perinatal growth. Essential for the maintenance of endothelial cell contact integrity and for the adhesive function of VE-cadherin in endothelial cells and this requires the presence of plakoglobin. This chain is Receptor-type tyrosine-protein phosphatase beta (Ptprb), found in Mus musculus (Mouse).